We begin with the raw amino-acid sequence, 147 residues long: Peroxynitrite isomerase (147 aa).

H137 is a binding site for heme b.

Belongs to the nitrobindin family. Homodimer. Heme b is required as a cofactor.

The enzyme catalyses peroxynitrite = nitrate. Its pathway is nitrogen metabolism. Functionally, heme-binding protein able to scavenge peroxynitrite and to protect free L-tyrosine against peroxynitrite-mediated nitration, by acting as a peroxynitrite isomerase that converts peroxynitrite to nitrate. Therefore, this protein likely plays a role in peroxynitrite sensing and in the detoxification of reactive nitrogen and oxygen species (RNS and ROS, respectively). Is able to bind nitric oxide (NO) in vitro, but may act as a sensor of peroxynitrite levels in vivo. This is Peroxynitrite isomerase from Frankia alni (strain DSM 45986 / CECT 9034 / ACN14a).